We begin with the raw amino-acid sequence, 335 residues long: Beta-hexosaminidase (335 aa).

Residues D60, R68, R133, and 163–164 (KH) contribute to the substrate site. H176 functions as the Proton donor/acceptor in the catalytic mechanism. D247 acts as the Nucleophile in catalysis.

Belongs to the glycosyl hydrolase 3 family. NagZ subfamily.

It localises to the cytoplasm. The catalysed reaction is Hydrolysis of terminal non-reducing N-acetyl-D-hexosamine residues in N-acetyl-beta-D-hexosaminides.. The protein operates within cell wall biogenesis; peptidoglycan recycling. Its function is as follows. Plays a role in peptidoglycan recycling by cleaving the terminal beta-1,4-linked N-acetylglucosamine (GlcNAc) from peptide-linked peptidoglycan fragments, giving rise to free GlcNAc, anhydro-N-acetylmuramic acid and anhydro-N-acetylmuramic acid-linked peptides. The protein is Beta-hexosaminidase of Xylella fastidiosa (strain M23).